We begin with the raw amino-acid sequence, 216 residues long: Histone doublet H4-H3 (216 aa).

The segment covering Met1–Gln12 has biased composition (basic residues). Residues Met1–Gly23 are disordered.

It localises to the host nucleus. The protein localises to the host cytoplasm. Its subcellular location is the virion. Its function is as follows. Histone-like protein that is recruited to viral factories during viral replication and participates in viral DNA packaging and virion production probably by forming unstable nucleosome-like particles. May compact the viral DNA. This is Histone doublet H4-H3 from Melbournevirus (MelV).